The primary structure comprises 240 residues: DNA repair protein RecO (240 aa).

Belongs to the RecO family.

Involved in DNA repair and RecF pathway recombination. This chain is DNA repair protein RecO, found in Wolbachia pipientis wMel.